A 218-amino-acid chain; its full sequence is Uracil-DNA glycosylase (218 aa).

The active-site Proton acceptor is aspartate 68.

The protein belongs to the uracil-DNA glycosylase (UDG) superfamily. UNG family. Homodimer. Interacts with protein OPG148. Component of the Uracil-DNA glycosylase(UDG)-OPG148-polymerase complex; OPG148 and UDG form a heterodimeric processivity factor that associates with OPG71 to form the processive polymerase holoenzyme.

It carries out the reaction Hydrolyzes single-stranded DNA or mismatched double-stranded DNA and polynucleotides, releasing free uracil.. Its function is as follows. Plays an essential role in viral replication as a component of the DNA polymerase processivity factor. Excises uracil residues from the DNA which can arise as a result of misincorporation of dUMP residues by DNA polymerase or due to deamination of cytosine. This is Uracil-DNA glycosylase (OPG116) from Vaccinia virus (strain Ankara) (VACV).